Consider the following 80-residue polypeptide: Acyl carrier protein (80 aa).

Positions 4–79 (EEIFNKIKDL…DAVSYIKSHQ (76 aa)) constitute a Carrier domain. Serine 39 is subject to O-(pantetheine 4'-phosphoryl)serine.

Belongs to the acyl carrier protein (ACP) family. Post-translationally, 4'-phosphopantetheine is transferred from CoA to a specific serine of apo-ACP by AcpS. This modification is essential for activity because fatty acids are bound in thioester linkage to the sulfhydryl of the prosthetic group.

The protein localises to the cytoplasm. Its pathway is lipid metabolism; fatty acid biosynthesis. In terms of biological role, carrier of the growing fatty acid chain in fatty acid biosynthesis. This Lactobacillus acidophilus (strain ATCC 700396 / NCK56 / N2 / NCFM) protein is Acyl carrier protein.